The following is a 271-amino-acid chain: NH(3)-dependent NAD(+) synthetase (271 aa).

Position 43–50 (43–50) interacts with ATP; sequence GISGGQDS. Residue Asp-49 participates in Mg(2+) binding. Position 136 (Arg-136) interacts with deamido-NAD(+). Thr-156 is an ATP binding site. A Mg(2+)-binding site is contributed by Glu-161. Residues Lys-169 and Asp-176 each contribute to the deamido-NAD(+) site. 2 residues coordinate ATP: Lys-185 and Thr-207. 256-257 serves as a coordination point for deamido-NAD(+); the sequence is HK.

It belongs to the NAD synthetase family. As to quaternary structure, homodimer.

It carries out the reaction deamido-NAD(+) + NH4(+) + ATP = AMP + diphosphate + NAD(+) + H(+). It functions in the pathway cofactor biosynthesis; NAD(+) biosynthesis; NAD(+) from deamido-NAD(+) (ammonia route): step 1/1. Catalyzes the ATP-dependent amidation of deamido-NAD to form NAD. Uses ammonia as a nitrogen source. This chain is NH(3)-dependent NAD(+) synthetase, found in Tropheryma whipplei (strain TW08/27) (Whipple's bacillus).